The following is a 435-amino-acid chain: MAAPLALVLVVAVTVRAALFRSSLAEFISERVEVVSPLSSWKRVVEGLSLLDLGVSPYSGAVFHETPLIIYLFHFLIDYAELVFMITDALTAIALYFAIQDFNKVVFKKQKLLLELDQYAPDVAELIRTPMEMRYIPLKVALFYLLNPYTILSCVAKSTCAINNTLIAFFILTTIKGSVFLSAIFLALATYQTLYPVTLFAPGLLYLLQRQYIPVKVKSKAFWIFSWEYAMMYIGSLVVIVCLSFFLLSSWDFIPAVYGFILSVPDLTPNIGLFWYFFAEMFEHFSLFFVCVFQINVFFYTVPLAIKLKEHPIFFMFIQIAIISIFKSYPTVGDVALYMAFFPVWNHLYRFLRNVFVLTCIIVVCSLLFPVLWHLWIYAGSANSNFFYAITLTFNVGQILLISDYFYAFLRREYYLTHGLYLTAKDGTEAMLVLK.

Residues 1-3 (MAA) lie on the Cytoplasmic side of the membrane. The helical transmembrane segment at 4–22 (PLALVLVVAVTVRAALFRS) threads the bilayer. At 23–78 (SLAEFISERVEVVSPLSSWKRVVEGLSLLDLGVSPYSGAVFHETPLIIYLFHFLID) the chain is on the lumenal side. Residues 79 to 99 (YAELVFMITDALTAIALYFAI) form a helical membrane-spanning segment. Residues 100 to 136 (QDFNKVVFKKQKLLLELDQYAPDVAELIRTPMEMRYI) are Cytoplasmic-facing. The next 4 membrane-spanning stretches (helical) occupy residues 137–158 (PLKV…VAKS), 159–178 (TCAI…IKGS), 179–194 (VFLS…YQTL), and 195–205 (YPVTLFAPGLL). Topologically, residues 206–222 (YLLQRQYIPVKVKSKAF) are cytoplasmic. Lysine 216 is a binding site for a cardiolipin. Residues 223–244 (WIFSWEYAMMYIGSLVVIVCLS) form a helical membrane-spanning segment. Residues 245–286 (FFLLSSWDFIPAVYGFILSVPDLTPNIGLFWYFFAEMFEHFS) are Lumenal-facing. The helical transmembrane segment at 287–306 (LFFVCVFQINVFFYTVPLAI) threads the bilayer. The Cytoplasmic segment spans residues 307–311 (KLKEH). Lysine 309 contacts a cardiolipin. 2 helical membrane passes run 312–331 (PIFF…SYPT) and 332–345 (VGDV…FPVW). Over 346–354 (NHLYRFLRN) the chain is Cytoplasmic. The chain crosses the membrane as a helical span at residues 355–372 (VFVLTCIIVVCSLLFPVL). The Lumenal segment spans residues 373–384 (WHLWIYAGSANS). A 2-acyl-6-[6-phosphoethanolamine-alpha-D-mannosyl-(1-&gt;2)-6-phosphoethanolamine-alpha-D-mannosyl-(1-&gt;6)-2-phosphoethanolamine-alpha-D-mannosyl-(1-&gt;4)-alpha-D-glucosaminyl]-1-(1-radyl,2-acyl-sn-glycero-3-phospho)-1D-myo-inositol is bound by residues asparagine 383 and asparagine 385. A helical membrane pass occupies residues 385–406 (NFFYAITLTFNVGQILLISDYF). At 407-435 (YAFLRREYYLTHGLYLTAKDGTEAMLVLK) the chain is on the cytoplasmic side.

This sequence belongs to the PIGU family. In terms of assembly, heteropentamer. Part of the GPI-anchor transamidase complex, consisting of PIGK, PIGT, PIGS, PIGU and GAA1.

It is found in the endoplasmic reticulum membrane. Its pathway is glycolipid biosynthesis; glycosylphosphatidylinositol-anchor biosynthesis. Component of the glycosylphosphatidylinositol-anchor (GPI-anchor) transamidase (GPI-T) complex that catalyzes the formation of the linkage between a proprotein and a GPI-anchor and participates in GPI anchored protein biosynthesis. Binds the lipid portion of GPI-anchor. May act as an organizer in the transmembrane layer to recruit other subunits, and thus is essential for assembly of the complex. The protein is GPI-anchor transamidase component PIGU of Cricetulus griseus (Chinese hamster).